Consider the following 239-residue polypeptide: Orotidine 5'-phosphate decarboxylase (239 aa).

Substrate-binding positions include Asp11, Lys33, 60-69, Thr123, Arg185, Gln194, Gly214, and Arg215; that span reads DLKLHDIPTT. The Proton donor role is filled by Lys62.

It belongs to the OMP decarboxylase family. Type 1 subfamily. Homodimer.

The enzyme catalyses orotidine 5'-phosphate + H(+) = UMP + CO2. The protein operates within pyrimidine metabolism; UMP biosynthesis via de novo pathway; UMP from orotate: step 2/2. In terms of biological role, catalyzes the decarboxylation of orotidine 5'-monophosphate (OMP) to uridine 5'-monophosphate (UMP). The chain is Orotidine 5'-phosphate decarboxylase (pyrF) from Bacillus subtilis (strain 168).